A 267-amino-acid polypeptide reads, in one-letter code: Thiazole synthase (267 aa).

Lys110 serves as the catalytic Schiff-base intermediate with DXP. 1-deoxy-D-xylulose 5-phosphate is bound by residues Gly171, 197–198 (AG), and 219–220 (NT).

It belongs to the ThiG family. As to quaternary structure, homotetramer. Forms heterodimers with either ThiH or ThiS.

It localises to the cytoplasm. The catalysed reaction is [ThiS sulfur-carrier protein]-C-terminal-Gly-aminoethanethioate + 2-iminoacetate + 1-deoxy-D-xylulose 5-phosphate = [ThiS sulfur-carrier protein]-C-terminal Gly-Gly + 2-[(2R,5Z)-2-carboxy-4-methylthiazol-5(2H)-ylidene]ethyl phosphate + 2 H2O + H(+). The protein operates within cofactor biosynthesis; thiamine diphosphate biosynthesis. In terms of biological role, catalyzes the rearrangement of 1-deoxy-D-xylulose 5-phosphate (DXP) to produce the thiazole phosphate moiety of thiamine. Sulfur is provided by the thiocarboxylate moiety of the carrier protein ThiS. In vitro, sulfur can be provided by H(2)S. In Maricaulis maris (strain MCS10) (Caulobacter maris), this protein is Thiazole synthase.